The primary structure comprises 304 residues: Non-specific ribonucleoside hydrolase RihC (304 aa).

The active site involves His233.

The protein belongs to the IUNH family. RihC subfamily.

Hydrolyzes both purine and pyrimidine ribonucleosides with a broad-substrate specificity. The sequence is that of Non-specific ribonucleoside hydrolase RihC from Shigella boydii serotype 4 (strain Sb227).